Consider the following 369-residue polypeptide: Deoxyhypusine synthase (369 aa).

Serine 78 bears the Phosphoserine mark. NAD(+)-binding positions include 105–109, 131–133, glutamate 137, and aspartate 238; these read SNLIS and TAG. Position 136–137 (136–137) interacts with spermidine; sequence EE. Aspartate 243 provides a ligand contact to spermidine. NAD(+) is bound at residue glycine 283. A spermidine-binding site is contributed by histidine 288. An NAD(+)-binding site is contributed by 308 to 309; that stretch reads TA. Spermidine-binding positions include 314-316 and 323-329; these read GSD and EAVSWGK. Lysine 329 (nucleophile) is an active-site residue. 342–343 contributes to the NAD(+) binding site; the sequence is DA.

The protein belongs to the deoxyhypusine synthase family. Homotetramer formed by a dimer of dimers. NAD(+) is required as a cofactor.

It catalyses the reaction [eIF5A protein]-L-lysine + spermidine = [eIF5A protein]-deoxyhypusine + propane-1,3-diamine. It participates in protein modification; eIF5A hypusination. Functionally, catalyzes the NAD-dependent oxidative cleavage of spermidine and the subsequent transfer of the butylamine moiety of spermidine to the epsilon-amino group of a critical lysine residue of the eIF-5A precursor protein to form the intermediate deoxyhypusine residue. This is the first step of the post-translational modification of that lysine into an unusual amino acid residue named hypusine. Hypusination is unique to mature eIF-5A factor and is essential for its function. This is Deoxyhypusine synthase (DHPS) from Homo sapiens (Human).